Reading from the N-terminus, the 263-residue chain is tRNA uridine(34) hydroxylase (263 aa).

The region spanning 129–223 is the Rhodanese domain; sequence EGREVVTLDT…YFEETDGAFY (95 aa). The active-site Cysteine persulfide intermediate is the C183.

Belongs to the TrhO family.

The catalysed reaction is uridine(34) in tRNA + AH2 + O2 = 5-hydroxyuridine(34) in tRNA + A + H2O. Catalyzes oxygen-dependent 5-hydroxyuridine (ho5U) modification at position 34 in tRNAs. The chain is tRNA uridine(34) hydroxylase from Delftia acidovorans (strain DSM 14801 / SPH-1).